Consider the following 63-residue polypeptide: Conotoxin Tx-D0111 (63 aa).

An N-terminal signal peptide occupies residues 1–19 (MRCLPVFVILLLLIASTPS). Positions 20 to 47 (DTVPLKTKDDMPQASFHGNARRTLQMLS) are excised as a propeptide.

It belongs to the conotoxin T superfamily. In terms of processing, contains 2 disulfide bonds that can be either 'C1-C3, C2-C4' or 'C1-C4, C2-C3', since these disulfide connectivities have been observed for conotoxins with cysteine framework V (for examples, see AC P0DQQ7 and AC P81755). As to expression, expressed by the venom duct.

Its subcellular location is the secreted. The polypeptide is Conotoxin Tx-D0111 (Conus textile (Cloth-of-gold cone)).